The primary structure comprises 296 residues: NAD kinase (296 aa).

Asp74 serves as the catalytic Proton acceptor. NAD(+) is bound by residues 74 to 75 (DG), 148 to 149 (ND), Arg176, Asp178, and 189 to 194 (TAYALS).

This sequence belongs to the NAD kinase family. It depends on a divalent metal cation as a cofactor.

The protein resides in the cytoplasm. The catalysed reaction is NAD(+) + ATP = ADP + NADP(+) + H(+). In terms of biological role, involved in the regulation of the intracellular balance of NAD and NADP, and is a key enzyme in the biosynthesis of NADP. Catalyzes specifically the phosphorylation on 2'-hydroxyl of the adenosine moiety of NAD to yield NADP. This is NAD kinase from Nitrosomonas eutropha (strain DSM 101675 / C91 / Nm57).